A 121-amino-acid chain; its full sequence is Ribonuclease P protein component (121 aa).

Belongs to the RnpA family. As to quaternary structure, consists of a catalytic RNA component (M1 or rnpB) and a protein subunit.

It catalyses the reaction Endonucleolytic cleavage of RNA, removing 5'-extranucleotides from tRNA precursor.. RNaseP catalyzes the removal of the 5'-leader sequence from pre-tRNA to produce the mature 5'-terminus. It can also cleave other RNA substrates such as 4.5S RNA. The protein component plays an auxiliary but essential role in vivo by binding to the 5'-leader sequence and broadening the substrate specificity of the ribozyme. The polypeptide is Ribonuclease P protein component (Bifidobacterium adolescentis (strain ATCC 15703 / DSM 20083 / NCTC 11814 / E194a)).